A 432-amino-acid polypeptide reads, in one-letter code: Short/branched chain specific acyl-CoA dehydrogenase, mitochondrial (432 aa).

A mitochondrion-targeting transit peptide spans 1–33 (MEGLAVRLLRGSRLLRRNFPTCLSSWKIPPHVS). Lysine 70 is modified (N6-acetyllysine; alternate). Lysine 70 bears the N6-succinyllysine; alternate mark. FAD contacts are provided by residues 174 to 183 (FCLSEAGAGS) and 207 to 209 (WIS). Residue serine 183 participates in substrate binding. Serine 183 carries the post-translational modification Phosphoserine. Substrate-binding residues include tyrosine 229 and tyrosine 283. Lysine 284 bears the N6-acetyllysine; alternate mark. Lysine 284 bears the N6-succinyllysine; alternate mark. 291–294 (NEGR) contributes to the substrate binding site. FAD-binding positions include arginine 319, glutamine 330, and 387–391 (EWMGG). Glutamate 414 functions as the Proton acceptor in the catalytic mechanism. Position 416-418 (416-418 (ASN)) interacts with FAD. Residue lysine 426 is modified to N6-acetyllysine.

The protein belongs to the acyl-CoA dehydrogenase family. In terms of assembly, homotetramer. FAD serves as cofactor.

It is found in the mitochondrion matrix. It carries out the reaction 2-methylbutanoyl-CoA + oxidized [electron-transfer flavoprotein] + H(+) = (2E)-2-methylbut-2-enoyl-CoA + reduced [electron-transfer flavoprotein]. It catalyses the reaction (2S)-2-methylbutanoyl-CoA + oxidized [electron-transfer flavoprotein] + H(+) = (2E)-2-methylbut-2-enoyl-CoA + reduced [electron-transfer flavoprotein]. The enzyme catalyses (2R)-2-methylbutanoyl-CoA + oxidized [electron-transfer flavoprotein] + H(+) = ethylacryloyl-CoA + reduced [electron-transfer flavoprotein]. The catalysed reaction is butanoyl-CoA + oxidized [electron-transfer flavoprotein] + H(+) = (2E)-butenoyl-CoA + reduced [electron-transfer flavoprotein]. It carries out the reaction 2-methylpropanoyl-CoA + oxidized [electron-transfer flavoprotein] + H(+) = 2-methylpropenoyl-CoA + reduced [electron-transfer flavoprotein]. It catalyses the reaction hexanoyl-CoA + oxidized [electron-transfer flavoprotein] + H(+) = (2E)-hexenoyl-CoA + reduced [electron-transfer flavoprotein]. The enzyme catalyses valproyl-CoA + oxidized [electron-transfer flavoprotein] + H(+) = (2E)-2-propylpent-2-enoyl-CoA + reduced [electron-transfer flavoprotein]. Its pathway is lipid metabolism; mitochondrial fatty acid beta-oxidation. It functions in the pathway amino-acid degradation; L-isoleucine degradation. Functionally, short and branched chain specific acyl-CoA dehydrogenase that catalyzes the removal of one hydrogen from C-2 and C-3 of the fatty acyl-CoA thioester, resulting in the formation of trans-2-enoyl-CoA. Among the different mitochondrial acyl-CoA dehydrogenases, acts specifically on short and branched chain acyl-CoA derivatives such as (S)-2-methylbutyryl-CoA as well as short straight chain acyl-CoAs such as butyryl-CoA. Plays an important role in the metabolism of L-isoleucine by catalyzing the dehydrogenation of 2-methylbutyryl-CoA, one of the steps of the L-isoleucine catabolic pathway. Can also act on valproyl-CoA, a metabolite of the valproic acid drug. The chain is Short/branched chain specific acyl-CoA dehydrogenase, mitochondrial (ACADSB) from Pongo abelii (Sumatran orangutan).